The primary structure comprises 177 residues: MARYEKQEKKDFVRKNEQIRVPQVRLIDSDGTMLGVKSVTEALYLAKQQELDLVEISPTAEPPVCKILDYSKYLYEQGKKLKDAKKKTAKTAMKELRIKSRIASHDLEVKIKHIEDFLKRKDMVRLVVVFHGRENQHRDLGEQMLHDVAKRLEPIANVEGGLQVTGNRMSMIFVPKN.

The protein belongs to the IF-3 family. In terms of assembly, monomer.

The protein resides in the cytoplasm. In terms of biological role, IF-3 binds to the 30S ribosomal subunit and shifts the equilibrium between 70S ribosomes and their 50S and 30S subunits in favor of the free subunits, thus enhancing the availability of 30S subunits on which protein synthesis initiation begins. In Elusimicrobium minutum (strain Pei191), this protein is Translation initiation factor IF-3.